The sequence spans 278 residues: Phage-like element PBSX protein XkdB (278 aa).

The H-T-H motif DNA-binding region spans 58–80 (LKAREMAAVFGVSEKTVRRWLEL). Disordered stretches follow at residues 117–136 (SLKE…RTDI) and 239–278 (QHER…RKQV). Over residues 248-263 (KTNNRTDFGRAEKRET) the composition is skewed to basic and acidic residues.

The protein to B.subtilis YqaL.

The protein is Phage-like element PBSX protein XkdB (xkdB) of Bacillus subtilis (strain 168).